Here is a 405-residue protein sequence, read N- to C-terminus: Imidazolonepropionase (405 aa).

Residues histidine 73 and histidine 75 each contribute to the Fe(3+) site. Zn(2+) is bound by residues histidine 73 and histidine 75. Residues arginine 82, tyrosine 145, and histidine 178 each coordinate 4-imidazolone-5-propanoate. Position 145 (tyrosine 145) interacts with N-formimidoyl-L-glutamate. Histidine 243 provides a ligand contact to Fe(3+). Histidine 243 serves as a coordination point for Zn(2+). Glutamine 246 serves as a coordination point for 4-imidazolone-5-propanoate. Residue aspartate 318 participates in Fe(3+) binding. Residue aspartate 318 coordinates Zn(2+). Asparagine 320 and glycine 322 together coordinate N-formimidoyl-L-glutamate. Residue threonine 323 participates in 4-imidazolone-5-propanoate binding.

It belongs to the metallo-dependent hydrolases superfamily. HutI family. The cofactor is Zn(2+). Fe(3+) serves as cofactor.

Its subcellular location is the cytoplasm. The catalysed reaction is 4-imidazolone-5-propanoate + H2O = N-formimidoyl-L-glutamate. It functions in the pathway amino-acid degradation; L-histidine degradation into L-glutamate; N-formimidoyl-L-glutamate from L-histidine: step 3/3. Its function is as follows. Catalyzes the hydrolytic cleavage of the carbon-nitrogen bond in imidazolone-5-propanoate to yield N-formimidoyl-L-glutamate. It is the third step in the universal histidine degradation pathway. The protein is Imidazolonepropionase of Brucella suis (strain ATCC 23445 / NCTC 10510).